The chain runs to 237 residues: Lectin alpha chain (237 aa).

Glu-8 and Asp-10 together coordinate Mn(2+). Residues Asp-10, Tyr-12, Asn-14, and Asp-19 each coordinate Ca(2+). Residue Tyr-12 participates in a carbohydrate binding. Residues Asp-19 and His-24 each coordinate Mn(2+). 99-100 contributes to the a carbohydrate binding site; sequence LY. Residue Asp-208 coordinates Ca(2+). An a carbohydrate-binding site is contributed by Arg-228.

This sequence belongs to the leguminous lectin family. Homotetramer. The beta and gamma chains are produced by partial proteolytic processing of the lectin alpha chain by an asparaginyl endopeptidase.

The protein localises to the vacuole. It localises to the aleurone grain. D-mannose/D-glucose-binding lectin with hemagglutinating activity towards rabbit and human erythrocytes. In rats, elicits an acute inflammatory response by inducing neutrophil migration and induces dose-dependent paw edema. The sequence is that of Lectin alpha chain from Macropsychanthus wilsonii (Wilson's clusterpea).